The chain runs to 726 residues: Methionine--tRNA ligase (726 aa).

Residues 12 to 22 carry the 'HIGH' region motif; the sequence is PYVNNIPHLGN. Residues cysteine 143, cysteine 146, cysteine 155, and cysteine 158 each coordinate Zn(2+). The 'KMSKS' region motif lies at 330–334; it reads KFSKS. Lysine 333 contacts ATP. One can recognise a tRNA-binding domain in the interval 562–667; the sequence is FSEQICLKTV…DNPIPGERVI (106 aa).

Belongs to the class-I aminoacyl-tRNA synthetase family. MetG type 1 subfamily. In terms of assembly, homodimer. It depends on Zn(2+) as a cofactor.

The protein localises to the cytoplasm. The enzyme catalyses tRNA(Met) + L-methionine + ATP = L-methionyl-tRNA(Met) + AMP + diphosphate. Is required not only for elongation of protein synthesis but also for the initiation of all mRNA translation through initiator tRNA(fMet) aminoacylation. The protein is Methionine--tRNA ligase of Borrelia recurrentis (strain A1).